Reading from the N-terminus, the 118-residue chain is UPF0125 protein RSc1426 (118 aa).

Belongs to the UPF0125 (RnfH) family.

This chain is UPF0125 protein RSc1426, found in Ralstonia nicotianae (strain ATCC BAA-1114 / GMI1000) (Ralstonia solanacearum).